We begin with the raw amino-acid sequence, 314 residues long: Ketimine reductase mu-crystallin (314 aa).

Arginine 47 provides a ligand contact to 3,3',5-triiodo-L-thyronine. NADPH is bound by residues serine 91, histidine 92, arginine 119, alanine 144, valine 146, glutamine 147, asparagine 168, arginine 169, threonine 170, asparagine 173, threonine 205, methionine 206, and valine 226. Glutamate 257 contributes to the 3,3',5-triiodo-L-thyronine binding site. Serine 292 is an NADPH binding site.

It belongs to the ornithine cyclodeaminase/mu-crystallin family. As to quaternary structure, homodimer. Binds the thyroid hormone triiodothyronine (T3); T3 binding inhibits enzymatic activity. Expressed at high abundance in lens, but outside the lens it is preferentially expressed in neural tissues, retina and brain.

The protein localises to the cytoplasm. It carries out the reaction L-pipecolate + NADP(+) = Delta(1)-piperideine-2-carboxylate + NADPH + H(+). It catalyses the reaction L-pipecolate + NAD(+) = Delta(1)-piperideine-2-carboxylate + NADH + H(+). The enzyme catalyses L-proline + NADP(+) = 1-pyrroline-2-carboxylate + NADPH + H(+). The catalysed reaction is L-proline + NAD(+) = 1-pyrroline-2-carboxylate + NADH + H(+). It carries out the reaction (3R)-1,4-thiomorpholine-3-carboxylate + NAD(+) = 3,4-dehydrothiomorpholine-3-carboxylate + NADH + 2 H(+). It catalyses the reaction (3R)-1,4-thiomorpholine-3-carboxylate + NADP(+) = 3,4-dehydrothiomorpholine-3-carboxylate + NADPH + 2 H(+). The enzyme catalyses (S)-cystathionine ketimine + NADH + 2 H(+) = (3R,5S)-2,3,5,6,7-pentahydro-1,4-thiazepine-3,5-dicarboxylate + NAD(+). The catalysed reaction is (S)-cystathionine ketimine + NADPH + 2 H(+) = (3R,5S)-2,3,5,6,7-pentahydro-1,4-thiazepine-3,5-dicarboxylate + NADP(+). It carries out the reaction (R)-lanthionine ketimine + NADPH + 2 H(+) = (3R,5R)-1,4-thiomorpholine-3,5-dicarboxylate + NADP(+). It catalyses the reaction Delta(2)-thiazoline-2-carboxylate + NADPH + 2 H(+) = L-thiazolidine-2-carboxylate + NADP(+). Its function is as follows. Catalyzes the NAD(P)H-dependent reduction of imine double bonds of a number of cyclic ketimine substrates, including sulfur-containing cyclic ketimines. Under physiological conditions, it efficiently catalyzes delta(1)-piperideine-2-carboxylate (P2C) and delta(1)-pyrroline-2-carboxylate (Pyr2C) reduction, suggesting a central role in lysine and glutamate metabolism. Additional substrates are delta(2)-thiazoline-2-carboxylate (T2C), 3,4-dehydrothiomorpholine-3-carboxylate (AECK), and (R)-lanthionine ketimine (LK) that is reduced at very low rate compared to other substrates. Also catalyzes the NAD(P)H-dependent reduction of (S)-cystathionine ketimine (CysK). The chain is Ketimine reductase mu-crystallin (CRYM) from Macropus fuliginosus (Western gray kangaroo).